The primary structure comprises 591 residues: Aspartate--tRNA ligase (591 aa).

Position 176 (glutamate 176) interacts with L-aspartate. The aspartate stretch occupies residues glutamine 200–lysine 203. Position 222 (arginine 222) interacts with L-aspartate. Residues arginine 222–glutamate 224 and glutamine 231 contribute to the ATP site. Histidine 450 contributes to the L-aspartate binding site. Glutamate 484 lines the ATP pocket. Arginine 491 is an L-aspartate binding site. Residue glycine 536–arginine 539 coordinates ATP.

The protein belongs to the class-II aminoacyl-tRNA synthetase family. Type 1 subfamily. Homodimer.

It is found in the cytoplasm. The catalysed reaction is tRNA(Asp) + L-aspartate + ATP = L-aspartyl-tRNA(Asp) + AMP + diphosphate. Catalyzes the attachment of L-aspartate to tRNA(Asp) in a two-step reaction: L-aspartate is first activated by ATP to form Asp-AMP and then transferred to the acceptor end of tRNA(Asp). In Listeria monocytogenes serovar 1/2a (strain ATCC BAA-679 / EGD-e), this protein is Aspartate--tRNA ligase.